The primary structure comprises 511 residues: Signal transduction histidine-protein kinase/phosphatase MprB (511 aa).

Topologically, residues 1–26 (MVGFRRGPRAPLRATSSLSLRWRVML) are cytoplasmic. Residues 27 to 47 (LAMSMVAMVVVLMSFAVYAVI) form a helical membrane-spanning segment. Topologically, residues 48-163 (SAALYSDIDN…PTEAVMTKLR (116 aa)) are extracellular. The chain crosses the membrane as a helical span at residues 164 to 184 (AVLLIVGGVGVAVAAVAGGMV). At 185–511 (TRAGLRPVGR…SVDSQSARAR (327 aa)) the chain is on the cytoplasmic side. In terms of domain architecture, HAMP spans 186–238 (RAGLRPVGRLTEAAERVARTDDLRPIPVFGSDELARLTEAFNLMLRALAESRE). Positions 246 to 466 (DAGHELRTPL…AICMLLPGRP (221 aa)) constitute a Histidine kinase domain. At His-249 the chain carries Phosphohistidine; by autocatalysis. A disordered region spans residues 468-511 (PDSAYPAAPDDKKTEPVDTRGANGANSRGSANVISVDSQSARAR). Basic and acidic residues predominate over residues 476–485 (PDDKKTEPVD). Polar residues predominate over residues 491-511 (GANSRGSANVISVDSQSARAR).

Mg(2+) serves as cofactor. Mn(2+) is required as a cofactor. Autophosphorylated.

The protein resides in the cell membrane. The enzyme catalyses ATP + protein L-histidine = ADP + protein N-phospho-L-histidine.. Its function is as follows. Member of the two-component regulatory system MprB/MprA which contributes to maintaining a balance among several systems involved in stress resistance and is required for establishment and maintenance of persistent infection in the host. In response to environmental signals MprB acts both as a membrane-associated protein kinase that undergoes autophosphorylation and subsequently transfers the phosphate to MprA, and a protein phosphatase that dephosphorylates phospho-MprA. This chain is Signal transduction histidine-protein kinase/phosphatase MprB (mprB), found in Mycobacterium ulcerans (strain Agy99).